The chain runs to 181 residues: Ribonuclease HII (181 aa).

The RNase H type-2 domain maps to 1 to 181; that stretch reads MICGIDEVGR…SLHRKSFRLI (181 aa). 3 residues coordinate a divalent metal cation: aspartate 6, glutamate 7, and aspartate 98.

The protein belongs to the RNase HII family. Mn(2+) serves as cofactor. It depends on Mg(2+) as a cofactor.

The protein resides in the cytoplasm. The catalysed reaction is Endonucleolytic cleavage to 5'-phosphomonoester.. Functionally, endonuclease that specifically degrades the RNA of RNA-DNA hybrids. The polypeptide is Ribonuclease HII (Borrelia recurrentis (strain A1)).